A 257-amino-acid polypeptide reads, in one-letter code: Acetylglutamate kinase (257 aa).

Residues 41–42 (GG), arginine 63, and asparagine 158 each bind substrate.

Belongs to the acetylglutamate kinase family. ArgB subfamily.

Its subcellular location is the cytoplasm. It catalyses the reaction N-acetyl-L-glutamate + ATP = N-acetyl-L-glutamyl 5-phosphate + ADP. The protein operates within amino-acid biosynthesis; L-arginine biosynthesis; N(2)-acetyl-L-ornithine from L-glutamate: step 2/4. In terms of biological role, catalyzes the ATP-dependent phosphorylation of N-acetyl-L-glutamate. In Bacteroides thetaiotaomicron (strain ATCC 29148 / DSM 2079 / JCM 5827 / CCUG 10774 / NCTC 10582 / VPI-5482 / E50), this protein is Acetylglutamate kinase.